The sequence spans 452 residues: Maltoporin (452 aa).

Positions 1–25 (MMITLRKLPLAVAVAAGVMSAQAMA) are cleaved as a signal peptide.

Belongs to the porin LamB (TC 1.B.3) family. In terms of assembly, homotrimer formed of three 18-stranded antiparallel beta-barrels, containing three independent channels.

It localises to the cell outer membrane. The enzyme catalyses beta-maltose(in) = beta-maltose(out). In terms of biological role, involved in the transport of maltose and maltodextrins. In Salmonella choleraesuis (strain SC-B67), this protein is Maltoporin.